Consider the following 214-residue polypeptide: Alkaline phosphatase-like protein (214 aa).

4 consecutive transmembrane segments (helical) span residues 3–23 (EIII…LIMI), 48–68 (LGII…ALIL), 141–161 (FLIL…SLGA), and 177–197 (YSSV…LLFV).

The protein belongs to the DedA family.

Its subcellular location is the cell membrane. This is Alkaline phosphatase-like protein (apl) from Lactococcus lactis subsp. cremoris (strain MG1363).